The sequence spans 289 residues: ATP synthase gamma chain (289 aa).

This sequence belongs to the ATPase gamma chain family. In terms of assembly, F-type ATPases have 2 components, CF(1) - the catalytic core - and CF(0) - the membrane proton channel. CF(1) has five subunits: alpha(3), beta(3), gamma(1), delta(1), epsilon(1). CF(0) has three main subunits: a, b and c.

It is found in the cell membrane. Functionally, produces ATP from ADP in the presence of a proton gradient across the membrane. The gamma chain is believed to be important in regulating ATPase activity and the flow of protons through the CF(0) complex. This chain is ATP synthase gamma chain, found in Lactococcus lactis subsp. lactis (strain IL1403) (Streptococcus lactis).